We begin with the raw amino-acid sequence, 647 residues long: Exoribonuclease 2 (647 aa).

An RNB domain is found at 190 to 519 (REDLTSLPFV…NHRLLKAIIK (330 aa)). The S1 motif domain maps to 564–646 (EQRFSAEVID…ETRSIVARPV (83 aa)).

Belongs to the RNR ribonuclease family. RNase II subfamily.

It is found in the cytoplasm. It catalyses the reaction Exonucleolytic cleavage in the 3'- to 5'-direction to yield nucleoside 5'-phosphates.. In terms of biological role, involved in mRNA degradation. Hydrolyzes single-stranded polyribonucleotides processively in the 3' to 5' direction. This is Exoribonuclease 2 from Erwinia tasmaniensis (strain DSM 17950 / CFBP 7177 / CIP 109463 / NCPPB 4357 / Et1/99).